The following is a 420-amino-acid chain: MTKWKRANPNGTRDYLFEECTLIEEVEQKLRRTFLERGYEEIRTPTIEFYDVFAFQSRPIDEEKMYKFFDEKGRIIVLRPDMTIPLARVMGTQRCDTPLKVTYSGNVFRANESLAGKYNEIVQSGIEVIGIDNVRAEIECVISVIQSLQKLKVQSFTIEIGQVQLYKCIVKKLSIHEEEEKVLRTYIESKNYAALSNFIRDKKLDRCDETVKLLEKLPRLFGNLEVIEEAEKLASSNEMKMAITRVKEIYEAIEKLGYGSYISIDLGMIQHLDYYTGVIFKGYIYEIGEEIVSGGRYDELIGNFGEMLPAVGLAVQVNQIVKALQEQQEPYERKRIDIMIHYELNRLAEAERLRNLLQKDGKKVALSLFSNLNDTFQFARKNQIVTVVEAKSESLVEYVWKEKWVVQKEGETSCVTFKLR.

It belongs to the class-II aminoacyl-tRNA synthetase family. HisZ subfamily. In terms of assembly, heteromultimer composed of HisG and HisZ subunits.

It localises to the cytoplasm. It participates in amino-acid biosynthesis; L-histidine biosynthesis; L-histidine from 5-phospho-alpha-D-ribose 1-diphosphate: step 1/9. In terms of biological role, required for the first step of histidine biosynthesis. May allow the feedback regulation of ATP phosphoribosyltransferase activity by histidine. This Bacillus cereus (strain ZK / E33L) protein is ATP phosphoribosyltransferase regulatory subunit.